A 329-amino-acid polypeptide reads, in one-letter code: Acetyl-coenzyme A carboxylase carboxyl transferase subunit alpha (329 aa).

The region spanning 40–294 is the CoA carboxyltransferase C-terminal domain; sequence QLESLAARRR…RAALERHLGE (255 aa).

This sequence belongs to the AccA family. As to quaternary structure, acetyl-CoA carboxylase is a heterohexamer composed of biotin carboxyl carrier protein (AccB), biotin carboxylase (AccC) and two subunits each of ACCase subunit alpha (AccA) and ACCase subunit beta (AccD).

Its subcellular location is the cytoplasm. It catalyses the reaction N(6)-carboxybiotinyl-L-lysyl-[protein] + acetyl-CoA = N(6)-biotinyl-L-lysyl-[protein] + malonyl-CoA. It participates in lipid metabolism; malonyl-CoA biosynthesis; malonyl-CoA from acetyl-CoA: step 1/1. In terms of biological role, component of the acetyl coenzyme A carboxylase (ACC) complex. First, biotin carboxylase catalyzes the carboxylation of biotin on its carrier protein (BCCP) and then the CO(2) group is transferred by the carboxyltransferase to acetyl-CoA to form malonyl-CoA. This is Acetyl-coenzyme A carboxylase carboxyl transferase subunit alpha from Parasynechococcus marenigrum (strain WH8102).